The chain runs to 932 residues: Isoleucine--tRNA ligase (932 aa).

A 'HIGH' region motif is present at residues proline 57 to threonine 67. An L-isoleucyl-5'-AMP-binding site is contributed by glutamate 559. A 'KMSKS' region motif is present at residues lysine 600–serine 604. Lysine 603 contacts ATP. Zn(2+)-binding residues include cysteine 899, cysteine 902, cysteine 919, and cysteine 922.

This sequence belongs to the class-I aminoacyl-tRNA synthetase family. IleS type 1 subfamily. As to quaternary structure, monomer. Zn(2+) serves as cofactor.

It localises to the cytoplasm. It catalyses the reaction tRNA(Ile) + L-isoleucine + ATP = L-isoleucyl-tRNA(Ile) + AMP + diphosphate. Functionally, catalyzes the attachment of isoleucine to tRNA(Ile). As IleRS can inadvertently accommodate and process structurally similar amino acids such as valine, to avoid such errors it has two additional distinct tRNA(Ile)-dependent editing activities. One activity is designated as 'pretransfer' editing and involves the hydrolysis of activated Val-AMP. The other activity is designated 'posttransfer' editing and involves deacylation of mischarged Val-tRNA(Ile). The protein is Isoleucine--tRNA ligase of Thermoanaerobacter pseudethanolicus (strain ATCC 33223 / 39E) (Clostridium thermohydrosulfuricum).